Here is a 77-residue protein sequence, read N- to C-terminus: Envelope glycoprotein (77 aa).

Residues 1–24 (LERQKNQNWYEGWFNSSPWFTTLL) are Extracellular-facing. The helical transmembrane segment at 25–45 (STIAGPLLLLLLLLILGPCII) threads the bilayer. Residue Cys43 is the site of S-palmitoyl cysteine; by host attachment. The Cytoplasmic portion of the chain corresponds to 46 to 77 (NRLVQFINNRVSAVKILVLRQKYQTLDNEDNL). The YXXL motif; contains endocytosis signal motif lies at 68-71 (YQTL).

As to quaternary structure, the mature envelope protein (Env) consists of a trimer of SU-TM heterodimers attached by noncovalent interactions or by a labile interchain disulfide bond. Specific enzymatic cleavages in vivo yield mature proteins. Envelope glycoproteins are synthesized as an inactive precursor that is N-glycosylated and processed likely by host cell furin or by a furin-like protease in the Golgi to yield the mature SU and TM proteins. The cleavage site between SU and TM requires the minimal sequence [KR]-X-[KR]-R. The R-peptide is released from the C-terminus of the cytoplasmic tail of the TM protein upon particle formation as a result of proteolytic cleavage by the viral protease. Cleavage of this peptide is required for TM to become fusogenic. In terms of processing, the transmembrane protein is palmitoylated. Post-translationally, the R-peptide is palmitoylated.

The protein localises to the virion membrane. It localises to the host cell membrane. In terms of biological role, the surface protein (SU) attaches the virus to the host cell by binding to its receptor. This interaction triggers the refolding of the transmembrane protein (TM) and is thought to activate its fusogenic potential by unmasking its fusion peptide. Fusion occurs at the host cell plasma membrane. Its function is as follows. The transmembrane protein (TM) acts as a class I viral fusion protein. Under the current model, the protein has at least 3 conformational states: pre-fusion native state, pre-hairpin intermediate state, and post-fusion hairpin state. During viral and target cell membrane fusion, the coiled coil regions (heptad repeats) assume a trimer-of-hairpins structure, positioning the fusion peptide in close proximity to the C-terminal region of the ectodomain. The formation of this structure appears to drive apposition and subsequent fusion of viral and target cell membranes. Membranes fusion leads to delivery of the nucleocapsid into the cytoplasm. In Woolly monkey sarcoma virus (WMSV), this protein is Envelope glycoprotein (env).